The chain runs to 395 residues: Protein phosphatase PP2A regulatory subunit A (395 aa).

HEAT repeat units follow at residues 44–81 (DCLA…AVGP), 83–120 (STKT…ILSP), 122–159 (LAIQ…VLGK), 161–198 (ATIE…VIGI), 200–237 (LLSQ…QLGV), 239–276 (FFDD…EEFG), 279–316 (WAMQ…VLGS), and 318–355 (ITST…IVDE).

The protein belongs to the phosphatase 2A regulatory subunit A family. PP2A exists in several trimeric forms, all of which consist of a core composed of a catalytic subunit associated with a 65 kDa regulatory subunit (PR65) (subunit A). The core complex associates with a third, variable subunit (subunit B), which confers distinct properties to the holoenzyme.

Its function is as follows. The PR65 subunit of protein phosphatase 2A serves as a scaffolding molecule to coordinate the assembly of the catalytic subunit and a variable regulatory B subunit. This is Protein phosphatase PP2A regulatory subunit A from Pisum sativum (Garden pea).